The following is a 518-amino-acid chain: Cytochrome P450 monooxygenase atnE (518 aa).

A helical membrane pass occupies residues 11–31 (FLAAFAVWMGVVVLAFAIFCV). A glycan (N-linked (GlcNAc...) asparagine) is linked at Asn-184. Residue Cys-458 coordinates heme.

The protein belongs to the cytochrome P450 family. Heme is required as a cofactor.

The protein localises to the membrane. The protein operates within secondary metabolite biosynthesis. Its function is as follows. Cytochrome P450 monooxygenase; part of the gene cluster that mediates the biosynthesis of aspercryptins, linear lipopeptides built from six amino acids including 2 highly unusual and nonproteogenic amino acids, 2-amino-octanoic acid (2aoa) and 2-amino-dodecanol (2adol). The core structure of aspercryptins is as follows: Ser/Ala-Thr-Ile/Val-2aoa-Asn-2adol. The first step of aspercryptin biosynthesis is the generation of the fatty acid precursors, octanoic and dodecanoic acids, by the FAS subunits atnF and atnM. The fatty acid precursors are likely transformed into the corresponding alpha-amino fatty acids in three steps. First, they are hydroxylated by the cytochrome P450 monooxygenase atnE, then oxidized to the corresponding alpha-keto acids by the NAD(P)-dependent oxidoreductase atnD, and finally converted to the alpha-amino fatty acids by the PLP-dependent aminotransferases atnH or atnJ. the alpha-amino fatty acids, 2-amino-octanoic and 2-amino-dodecanoic acids, are recognized, activated, and covalently tethered to the NRPS atnA by its fourth and sixth adenylation domains. The second module of atnA is the Thr module and contains an epimerase (E) domain responsible for the epimerization of Thr to D-allo-Thr. Additionally, despite atnA having only one epimerase domain, the first amino acid of aspercryptin A1 is D-Ser, suggesting that serine is either loaded directly as D-Ser on the first module or that the epimerase domain in the threonine module epimerizes both L-Ser and L-Thr. After condensation of the hexapeptide of aspercryptin, the C-terminal reductase (TE) domain might be involved in the reductive release and production of the aldehyde hexapeptide. Further reduction would generate aspercryptins. The variety of aspercryptins produced reflects the flexibility of the atnA NRPS, allowing incorporation of alanine instead of serine, valine for isoleucine, and a C10 fatty amino alcohol instead of the C12 version. AtnB seems to be involved in the selectivity for Ile versus Val by the third module. Moreover, type B, C and D aspercryptins have an additional N-terminal cichorine, acetyl and propionyl group respectively. This Emericella nidulans (strain FGSC A4 / ATCC 38163 / CBS 112.46 / NRRL 194 / M139) (Aspergillus nidulans) protein is Cytochrome P450 monooxygenase atnE.